The primary structure comprises 622 residues: Probable potassium transport system protein Kup 2 (622 aa).

A run of 12 helical transmembrane segments spans residues 9–29 (LSGV…TSPL), 46–66 (PASI…VVSV), 99–119 (TPLL…EVVI), 137–157 (PSLD…LFAI), 169–189 (FAPI…NSIF), 213–233 (ASFF…ALYA), 247–267 (WFMV…ALLL), 285–305 (ALLP…QAVI), 337–357 (IYIP…IMSF), 363–383 (LAAA…ILSC), 396–416 (LVAA…AANL), and 419–439 (IFSG…VMTS).

It belongs to the HAK/KUP transporter (TC 2.A.72) family.

The protein resides in the cell inner membrane. It carries out the reaction K(+)(in) + H(+)(in) = K(+)(out) + H(+)(out). Its function is as follows. Transport of potassium into the cell. Likely operates as a K(+):H(+) symporter. In Aeromonas hydrophila subsp. hydrophila (strain ATCC 7966 / DSM 30187 / BCRC 13018 / CCUG 14551 / JCM 1027 / KCTC 2358 / NCIMB 9240 / NCTC 8049), this protein is Probable potassium transport system protein Kup 2.